The sequence spans 234 residues: 7-cyano-7-deazaguanine synthase (234 aa).

An ATP-binding site is contributed by 13 to 23 (FSGGIDSTTCL). Zn(2+)-binding residues include C197, C207, C210, and C213.

Belongs to the QueC family. Zn(2+) serves as cofactor.

The enzyme catalyses 7-carboxy-7-deazaguanine + NH4(+) + ATP = 7-cyano-7-deazaguanine + ADP + phosphate + H2O + H(+). Its pathway is purine metabolism; 7-cyano-7-deazaguanine biosynthesis. In terms of biological role, catalyzes the ATP-dependent conversion of 7-carboxy-7-deazaguanine (CDG) to 7-cyano-7-deazaguanine (preQ(0)). The protein is 7-cyano-7-deazaguanine synthase of Syntrophobacter fumaroxidans (strain DSM 10017 / MPOB).